Reading from the N-terminus, the 152-residue chain is Small ribosomal subunit protein uS8m (152 aa).

Belongs to the universal ribosomal protein uS8 family. Component of the mitochondrial small ribosomal subunit (mt-SSU). Mature yeast 74S mitochondrial ribosomes consist of a small (37S) and a large (54S) subunit. The 37S small subunit contains a 15S ribosomal RNA (15S mt-rRNA) and at least 32 different proteins. The 54S large subunit contains a 21S rRNA (21S mt-rRNA) and at least 45 different proteins.

The protein localises to the mitochondrion. In terms of biological role, component of the mitochondrial ribosome (mitoribosome), a dedicated translation machinery responsible for the synthesis of mitochondrial genome-encoded proteins, including at least some of the essential transmembrane subunits of the mitochondrial respiratory chain. The mitoribosomes are attached to the mitochondrial inner membrane and translation products are cotranslationally integrated into the membrane. The chain is Small ribosomal subunit protein uS8m (mrps8) from Schizosaccharomyces pombe (strain 972 / ATCC 24843) (Fission yeast).